The chain runs to 400 residues: Endoplasmin (400 aa).

Position 1 is an N6-succinyllysine (Lys-1). Asn-42 carries N-linked (GlcNAc...) asparagine glycosylation. Ser-44 carries the post-translational modification Phosphoserine. Lys-76 carries the N6-acetyllysine modification. Residues Asn-78 and Asn-99 are each glycosylated (N-linked (GlcNAc...) asparagine). Residue Lys-230 is modified to N6-succinyllysine. The disordered stretch occupies residues Ile-346–Leu-400. A compositionally biased stretch (acidic residues) spans Ala-350–Gln-387. Thr-379 is subject to Phosphothreonine. Over residues Glu-388–Leu-400 the composition is skewed to basic and acidic residues. The short motif at Lys-397–Leu-400 is the Prevents secretion from ER element.

It belongs to the heat shock protein 90 family. As to quaternary structure, homodimer; disulfide-linked. Component of an EIF2 complex at least composed of CELF1/CUGBP1, CALR, CALR3, EIF2S1, EIF2S2, HSP90B1 and HSPA5. Part of a large chaperone multiprotein complex comprising DNAJB11, HSP90B1, HSPA5, HYOU, PDIA2, PDIA4, PDIA6, PPIB, SDF2L1, UGGT1 and very small amounts of ERP29, but not, or at very low levels, CALR nor CANX. Interacts with AIMP1; regulates its retention in the endoplasmic reticulum. Hyperglycosylated form interacts with OS9; promoting its degradation by the endoplasmic reticulum associated degradation (ERAD). Interacts with CNPY3. This interaction is disrupted in the presence of ATP. Interacts with TLR4 and TLR9, but not with TLR3. Interacts with MZB1 in a calcium-dependent manner. Interacts with METTL23. Interacts with IL1B; the interaction facilitates cargo translocation into the ERGIC. Interacts with EIF2AK3. In terms of processing, phosphorylated by CK2. N-glycosylated cotranslationally at Asn-217 by STT3A-containing OST-A complex: this glycosylation is constitutive. In response to various stress, 5 additional facultative sites (Asn-62, Asn-107, Asn-445, Asn-481 and Asn-502) can be glycosylated post-translationally by STT3B-containing OST-B complex, leading to a hyperglycosylated form that is degraded by the ER-associated degradation (ERAD) pathway. In normal conditions, the OST-A complex together with CCDC134 prevent glycosylation at facultative sites during protein folding, thereby preventing hyperglycosylation. Mechanistically, nascent HSP90B1 is tethered during translation to a specialized CCDC134-containing translocon that forms a microenvironment for its folding, in which STT3A associates with the SRT pseudosubstrate motif, and prevents access to facultative glycosylation sites until folding is completed, rendering its facultative sites inaccessible to the OST-B complex.

It localises to the endoplasmic reticulum lumen. Its subcellular location is the sarcoplasmic reticulum lumen. The protein localises to the melanosome. It catalyses the reaction ATP + H2O = ADP + phosphate + H(+). ATP-dependent chaperone involved in the processing of proteins in the endoplasmic reticulum, regulating their transport. Together with MESD, acts as a modulator of the Wnt pathway by promoting the folding of LRP6, a coreceptor of the canonical Wnt pathway. When associated with CNPY3, required for proper folding of Toll-like receptors. Promotes folding and trafficking of TLR4 to the cell surface. May participate in the unfolding of cytosolic leaderless cargos (lacking the secretion signal sequence) such as the interleukin 1/IL-1 to facilitate their translocation into the ERGIC (endoplasmic reticulum-Golgi intermediate compartment) and secretion; the translocation process is mediated by the cargo receptor TMED10. The protein is Endoplasmin (HSP90B1) of Mesocricetus auratus (Golden hamster).